The following is a 580-amino-acid chain: CTP synthase (580 aa).

The Glutamine amidotransferase type-1 domain occupies 304–559; the sequence is NIILVGKYVS…VAASSGCLDE (256 aa). Residues Cys-403, His-532, and Glu-534 each act as for GATase activity in the active site.

The protein belongs to the CTP synthase family.

The catalysed reaction is UTP + L-glutamine + ATP + H2O = CTP + L-glutamate + ADP + phosphate + 2 H(+). It participates in pyrimidine metabolism; CTP biosynthesis via de novo pathway; CTP from UDP: step 2/2. In terms of biological role, catalyzes the ATP-dependent amination of UTP to CTP with either L-glutamine or ammonia as the source of nitrogen. The sequence is that of CTP synthase (URA7) from Gibberella zeae (strain ATCC MYA-4620 / CBS 123657 / FGSC 9075 / NRRL 31084 / PH-1) (Wheat head blight fungus).